The following is a 609-amino-acid chain: Probable G-protein coupled receptor 153 (609 aa).

The Extracellular portion of the chain corresponds to 1–11 (MSDERRLPGSA). A helical membrane pass occupies residues 12 to 32 (VGWLVCGGLSLLANAWGILSV). The Cytoplasmic portion of the chain corresponds to 33 to 41 (GAKQKKWKP). The helical transmembrane segment at 42 to 62 (LEFLLCTLAATHMLNVAVPIA) threads the bilayer. The Extracellular portion of the chain corresponds to 63-84 (TYSVVQLRRQRPDFEWNEGLCK). The chain crosses the membrane as a helical span at residues 85–105 (VFVSTFYTLTLATCFSVTSLS). The Cytoplasmic portion of the chain corresponds to 106-126 (YHRMWMVCWPVNYRLSNAKKQ). Residues 127 to 147 (AVHTVMGIWMVSFILSALPAV) traverse the membrane as a helical segment. The Extracellular portion of the chain corresponds to 148 to 175 (GWHDTSERFYTHGCRFIVAEIGLGFGVC). The helical transmembrane segment at 176-196 (FLLLVGGSVAMGVICTAIALF) threads the bilayer. Over 197–243 (QTLAVQVGRQADRRAFTVPTIVVEDAQGKRRSSIDGSEPAKTSLQTT) the chain is Cytoplasmic. Residues 244 to 264 (GLVTTIVFIYDCLMGFPVLVV) form a helical membrane-spanning segment. The Extracellular portion of the chain corresponds to 265 to 276 (SFSSLRADASAP). The chain crosses the membrane as a helical span at residues 277 to 297 (WMALCVLWCSVAQALLLPVFL). The Cytoplasmic segment spans residues 298 to 609 (WACDRYRADL…LHSDSLGSAS (312 aa)). Disordered regions lie at residues 446–496 (DAPP…SASA) and 514–609 (ALRR…GSAS). Composition is skewed to low complexity over residues 458-479 (ESLLSLRPSALDSGPRGARDSP) and 527-536 (AAPDGADPGE). Gly residues predominate over residues 571 to 583 (EPGGLRAAGGGGS). Over residues 584–596 (TSSFLSSPSESSG) the composition is skewed to low complexity.

Belongs to the G-protein coupled receptor 1 family.

The protein localises to the cell membrane. Its function is as follows. Orphan receptor. The protein is Probable G-protein coupled receptor 153 (GPR153) of Homo sapiens (Human).